Consider the following 481-residue polypeptide: Zinc metalloproteinase/disintegrin (481 aa).

The signal sequence occupies residues 1 to 20 (MIEVLLVTICLAVFPYQGSS). A propeptide spanning residues 21–189 (IILESGNVND…KKASQLYLTP (169 aa)) is cleaved from the precursor. Glu-190 carries the post-translational modification Pyrrolidone carboxylic acid (Glu). One can recognise a Peptidase M12B domain in the interval 197-392 (RYIKLAIVVD…DNPQCILNAP (196 aa)). Residue 296–299 (RNTI) coordinates an L-amino acid tripeptide. 3 disulfides stabilise this stretch: Cys-308–Cys-387, Cys-349–Cys-371, and Cys-351–Cys-354. A Zn(2+)-binding site is contributed by His-333. Glu-334 is an active-site residue. 2 residues coordinate Zn(2+): His-337 and His-343. Ser-357 is an an L-amino acid tripeptide binding site. A propeptide spanning residues 393-410 (LRTDTVSTPVSGNEFLEA) is cleaved from the precursor. A Disintegrin domain is found at 400-481 (TPVSGNEFLE…ADCPRNGLYG (82 aa)). 6 disulfide bridges follow: Cys-414-Cys-429, Cys-416-Cys-424, Cys-423-Cys-446, Cys-437-Cys-443, Cys-442-Cys-467, and Cys-455-Cys-474. The Cell attachment site signature appears at 459–461 (RGD).

Belongs to the venom metalloproteinase (M12B) family. P-II subfamily. P-IIa sub-subfamily. Monomer. Zn(2+) serves as cofactor. The N-terminus is blocked. In terms of tissue distribution, expressed by the venom gland.

The protein resides in the secreted. Inhibited by EDTA and 1,10-phenanthroline. Is also inhibited by endogenous tripeptide inhibitors pyroGlu-Asn-Trp, pyroGlu-Gln-Trp, and pyroGlu-Lys-Trp. Potent fibrinogenolytic protease which cleaves mainly the Aalpha chain of fibrinogen (FGA) and slightly the Bbeta (FGB) and the gamma (FGG) chains. May possess hemorrhagic activity. Compared to other SVMP, the substrate-binding pocket is relatively shallow. Is less susceptible to tripeptide inhibitors than TM-1 (AC U3KRG1) and TM-2. Its function is as follows. Inhibits platelet aggregation induced by ADP, thrombin, platelet-activating factor and collagen. Acts by inhibiting fibrinogen interaction with platelet receptors GPIIb/GPIIIa (ITGA2B/ITGB3). The chain is Zinc metalloproteinase/disintegrin from Protobothrops mucrosquamatus (Taiwan habu).